Reading from the N-terminus, the 183-residue chain is Cyanate hydratase (183 aa).

Catalysis depends on residues R118, E121, and S144.

Belongs to the cyanase family.

The enzyme catalyses cyanate + hydrogencarbonate + 3 H(+) = NH4(+) + 2 CO2. Functionally, catalyzes the reaction of cyanate with bicarbonate to produce ammonia and carbon dioxide. This Cryptococcus neoformans var. neoformans serotype D (strain B-3501A) (Filobasidiella neoformans) protein is Cyanate hydratase.